A 128-amino-acid chain; its full sequence is MFYSIVAIFVGAGFGALLRWFLSIGLNALLPEVPLGTLASNLIGGYLIGIAVVAFATRAGLPPEWRLFVITGFMGGLTTFSTYSVEVMTHAVQGEFGWALAVAALHLIGSFTLTGLGMWTARAWLAPA.

The next 4 helical transmembrane spans lie at 5 to 25 (IVAI…LSIG), 35 to 55 (LGTL…VVAF), 67 to 87 (LFVI…SVEV), and 96 to 116 (FGWA…LTGL). Positions 75 and 78 each coordinate Na(+).

It belongs to the fluoride channel Fluc/FEX (TC 1.A.43) family.

Its subcellular location is the cell inner membrane. The enzyme catalyses fluoride(in) = fluoride(out). Na(+) is not transported, but it plays an essential structural role and its presence is essential for fluoride channel function. Fluoride-specific ion channel. Important for reducing fluoride concentration in the cell, thus reducing its toxicity. The chain is Fluoride-specific ion channel FluC from Burkholderia mallei (strain NCTC 10247).